The following is a 413-amino-acid chain: Tyrosine--tRNA ligase (413 aa).

Residues 57–66 carry the 'HIGH' region motif; sequence PTAPDIHLGH. Residues 241 to 245 carry the 'KMSKS' region motif; sequence KMSKS. Lys-244 is an ATP binding site. Residues 351-412 enclose the S4 RNA-binding domain; the sequence is VWLPRLMVQA…GKRKFARLHT (62 aa).

This sequence belongs to the class-I aminoacyl-tRNA synthetase family. TyrS type 2 subfamily. As to quaternary structure, homodimer.

The protein resides in the cytoplasm. The enzyme catalyses tRNA(Tyr) + L-tyrosine + ATP = L-tyrosyl-tRNA(Tyr) + AMP + diphosphate + H(+). Its function is as follows. Catalyzes the attachment of tyrosine to tRNA(Tyr) in a two-step reaction: tyrosine is first activated by ATP to form Tyr-AMP and then transferred to the acceptor end of tRNA(Tyr). The polypeptide is Tyrosine--tRNA ligase (Moorella thermoacetica (strain ATCC 39073 / JCM 9320)).